We begin with the raw amino-acid sequence, 589 residues long: Mini-chromosome maintenance complex-binding protein (589 aa).

Residues 163–211 form a disordered region; that stretch reads VDEEMTDSMDSSTLEAGRNGSPFKKMKVGEATSSASESQVPQTSGIPPA. Residues 193–207 are compositionally biased toward polar residues; the sequence is ATSSASESQVPQTSG.

It belongs to the MCMBP family. As to quaternary structure, interacts with the MCM complex.

It localises to the nucleus. Functionally, associated component of the MCM complex that acts as a regulator of DNA replication. Binds to the MCM complex during late S phase and may act by promoting the disassembly of the MCM complex from chromatin. Required for sister chromatid cohesion. This chain is Mini-chromosome maintenance complex-binding protein (ETG1), found in Arabidopsis thaliana (Mouse-ear cress).